The chain runs to 186 residues: TATA box-binding protein-like 1 (186 aa).

The protein belongs to the TBP family.

It localises to the cytoplasm. The protein localises to the nucleus. Part of a specialized transcription system that mediates the transcription of most ribosomal proteins through the 5'-TCT-3' motif which is a core promoter element at these genes. Seems to also mediate the transcription of NF1. Does not bind the TATA box. Members of the TBP family are differentially required to regulate transcription and development during early embryogenesis. Particularly regulates genes that have a role in catabolism. The sequence is that of TATA box-binding protein-like 1 (tbpl1) from Xenopus tropicalis (Western clawed frog).